Here is a 128-residue protein sequence, read N- to C-terminus: Arsenic resistance transcriptional regulator ArsR1 (128 aa).

The HTH arsR-type domain occupies 11–103 (MREILTPPIV…AMLKGVVDAN (93 aa)). Arsenite-binding residues include Cys-43 and Cys-45. Positions 44–67 (VCELTHALELSQPKISRHLAQLRE) form a DNA-binding region, H-T-H motif.

Homodimer.

It is found in the cytoplasm. Functionally, binds arsenite and regulates the expression of arsenic efflux pumps. In vitro, also binds antimony and bismuth, but not arsenate. The sequence is that of Arsenic resistance transcriptional regulator ArsR1 from Pseudomonas putida (strain ATCC 47054 / DSM 6125 / CFBP 8728 / NCIMB 11950 / KT2440).